We begin with the raw amino-acid sequence, 341 residues long: Phosphate acyltransferase (341 aa).

Belongs to the PlsX family. In terms of assembly, homodimer. Probably interacts with PlsY.

Its subcellular location is the cytoplasm. It carries out the reaction a fatty acyl-[ACP] + phosphate = an acyl phosphate + holo-[ACP]. The protein operates within lipid metabolism; phospholipid metabolism. Catalyzes the reversible formation of acyl-phosphate (acyl-PO(4)) from acyl-[acyl-carrier-protein] (acyl-ACP). This enzyme utilizes acyl-ACP as fatty acyl donor, but not acyl-CoA. This Idiomarina loihiensis (strain ATCC BAA-735 / DSM 15497 / L2-TR) protein is Phosphate acyltransferase.